Reading from the N-terminus, the 317-residue chain is MSATEEENVLVFDTTMKKKKKSKDSAAQTEEEKKKLKSKTLAMMSQQEDEQEQEDEKKEKRKKKKAALLASTEGENSEAIEKLENEGAHDEDIEAEFMGEKKKKKKSSKSSTTTTTSTTTTTTEPTETEPTEDGESKEKTITTSDGDTFVQGTIPWAGTDRDYKYSELTYRIYHLLQANNPDLISDQKRTMKPPQVMREGTKKTIWANFAEICGTLNRKVEHVYNYVFAELGTNGSIDGNQRLVIRGRFKTSQIEIVIRHYISEYVACRNCKSPNTVLERNNRLYFLCCNACNSKRSVAVIKKGLEGAGKKAPKEQS.

A disordered region spans residues 1 to 146 (MSATEEENVL…KEKTITTSDG (146 aa)). Residues 79–90 (AIEKLENEGAHD) show a composition bias toward basic and acidic residues. Over residues 109 to 125 (KSSTTTTTSTTTTTTEP) the composition is skewed to low complexity. The segment at 222 to 246 (HVYNYVFAELGTNGSIDGNQRLVIR) adopts a C4-type zinc-finger fold.

It belongs to the eIF-2-beta/eIF-5 family. In terms of assembly, eukaryotic translation initiation factor 2 eIF2 is a heterotrimeric complex composed of an alpha, a beta and a gamma subunit.

It localises to the cytoplasm. It is found in the cytosol. Component of the eIF2 complex that functions in the early steps of protein synthesis by forming a ternary complex with GTP and initiator tRNA. This complex binds to a 40S ribosomal subunit, followed by mRNA binding to form a 43S pre-initiation complex (43S PIC). Junction of the 60S ribosomal subunit to form the 80S initiation complex is preceded by hydrolysis of the GTP bound to eIF2 and release of an eIF2-GDP binary complex. In order for eIF2 to recycle and catalyze another round of initiation, the GDP bound to eIF2 must exchange with GTP by way of a reaction catalyzed by eIF2B. This is Eukaryotic translation initiation factor 2 subunit 2 (eif2s2) from Dictyostelium discoideum (Social amoeba).